We begin with the raw amino-acid sequence, 336 residues long: Biotin synthase (336 aa).

The 228-residue stretch at Asn55–Arg282 folds into the Radical SAM core domain. Positions 70, 74, and 77 each coordinate [4Fe-4S] cluster. Positions 114, 145, 205, and 277 each coordinate [2Fe-2S] cluster.

Belongs to the radical SAM superfamily. Biotin synthase family. In terms of assembly, homodimer. The cofactor is [4Fe-4S] cluster. [2Fe-2S] cluster is required as a cofactor.

It catalyses the reaction (4R,5S)-dethiobiotin + (sulfur carrier)-SH + 2 reduced [2Fe-2S]-[ferredoxin] + 2 S-adenosyl-L-methionine = (sulfur carrier)-H + biotin + 2 5'-deoxyadenosine + 2 L-methionine + 2 oxidized [2Fe-2S]-[ferredoxin]. It functions in the pathway cofactor biosynthesis; biotin biosynthesis; biotin from 7,8-diaminononanoate: step 2/2. Catalyzes the conversion of dethiobiotin (DTB) to biotin by the insertion of a sulfur atom into dethiobiotin via a radical-based mechanism. The sequence is that of Biotin synthase from Brucella anthropi (strain ATCC 49188 / DSM 6882 / CCUG 24695 / JCM 21032 / LMG 3331 / NBRC 15819 / NCTC 12168 / Alc 37) (Ochrobactrum anthropi).